A 230-amino-acid polypeptide reads, in one-letter code: 2-amino-5-formylamino-6-ribosylaminopyrimidin-4(3H)-one 5'-monophosphate deformylase (230 aa).

Residues glutamate 29, histidine 31, aspartate 40, and histidine 109 each contribute to the Fe cation site.

It belongs to the creatininase superfamily. FAPy deformylase family. As to quaternary structure, homodimer. The cofactor is Fe(2+). Zn(2+) serves as cofactor.

It catalyses the reaction 2-amino-5-formylamino-6-(5-phospho-D-ribosylamino)pyrimidin-4(3H)-one + H2O = 2,5-diamino-6-(1-D-ribosylamino)pyrimidin-4(3H)-one 5'-phosphate + formate + H(+). Its pathway is cofactor biosynthesis; coenzyme F420 biosynthesis. The protein operates within cofactor biosynthesis; riboflavin biosynthesis. Functionally, catalyzes the hydrolysis of the formamide of 2-amino-5-formylamino-6-ribosylamino-4(3H)-pyrimidinone 5'-monophosphate (FAPy) to form 2,5-diamino-6-ribosylamino-4(3H)-pyrimidinone 5'-phosphate (APy). The sequence is that of 2-amino-5-formylamino-6-ribosylaminopyrimidin-4(3H)-one 5'-monophosphate deformylase from Methanobrevibacter smithii (strain ATCC 35061 / DSM 861 / OCM 144 / PS).